We begin with the raw amino-acid sequence, 718 residues long: K(+)-insensitive pyrophosphate-energized proton pump (718 aa).

The next 6 membrane-spanning stretches (helical) occupy residues 6 to 26, 61 to 81, 83 to 103, 112 to 132, 133 to 153, and 168 to 188; these read AVLVLVIACGVLSVLFAIWAI, IAIVGIVVFLLAWYLLSLNAA, GFLIGAVLSGVTGFIGMHVSV, AASLSLAGGLELAFKSGAITG, LLVAGLALLGVSVYYFVLTVW, and VSLGFGASLISIFARLGGGIF. Lys190 lines the substrate pocket. Mg(2+) is bound by residues Asp193, Asp197, Asn220, and Asp223. 6 helical membrane-spanning segments follow: residues 235-255, 265-285, 300-320, 335-355, 385-405, and 413-433; these read LFETYAVTVVATMVLGAIFFH, LYPLMICGACVITSIAGTFFV, GLIATGLLSIVGLGVANTLTV, GTNLFVCGLIGLIVTGLIVVI, GLAVSLESTALPAIVIVGGII, and LFGTAIAVTAMLGIAGMIVAL. Asp441 contacts Mg(2+). Transmembrane regions (helical) follow at residues 472 to 492, 524 to 544, 593 to 613, and 620 to 640; these read AVTKGYAIGSAGLGALVLFAA, YVVAGLIFGGLIPYLFGGMAM, IIPSLLPVLAPIVVYFGVLLI, and AFAALGASLLGVIINGLFVAI. Ca(2+)-binding residues include Asp650, Asp682, and Asp686. Lys689 lines the substrate pocket. A helical membrane pass occupies residues 695-715; the sequence is AVNPAIKITNIVALLLLAVLA.

This sequence belongs to the H(+)-translocating pyrophosphatase (TC 3.A.10) family. K(+)-insensitive subfamily. Homodimer. Mg(2+) is required as a cofactor.

It localises to the cell inner membrane. The enzyme catalyses diphosphate + H2O + H(+)(in) = 2 phosphate + 2 H(+)(out). Proton pump that utilizes the energy of pyrophosphate hydrolysis as the driving force for proton movement across the membrane. Generates a proton motive force. This chain is K(+)-insensitive pyrophosphate-energized proton pump, found in Brucella melitensis biotype 1 (strain ATCC 23456 / CCUG 17765 / NCTC 10094 / 16M).